The following is a 451-amino-acid chain: Phosphoglucosamine mutase (451 aa).

Serine 101 acts as the Phosphoserine intermediate in catalysis. Positions 101, 241, 243, and 245 each coordinate Mg(2+). At serine 101 the chain carries Phosphoserine.

The protein belongs to the phosphohexose mutase family. It depends on Mg(2+) as a cofactor. Post-translationally, activated by phosphorylation.

It carries out the reaction alpha-D-glucosamine 1-phosphate = D-glucosamine 6-phosphate. In terms of biological role, catalyzes the conversion of glucosamine-6-phosphate to glucosamine-1-phosphate. In Exiguobacterium sibiricum (strain DSM 17290 / CCUG 55495 / CIP 109462 / JCM 13490 / 255-15), this protein is Phosphoglucosamine mutase.